The chain runs to 198 residues: Phosphoheptose isomerase (198 aa).

Positions 36 to 198 (MARALGADRK…DRTLFGGPGG (163 aa)) constitute an SIS domain. Residue 51 to 53 (NGG) participates in substrate binding. The Zn(2+) site is built by H60 and E64. Substrate contacts are provided by residues E64, 93–94 (ND), 119–121 (STS), S124, and Q174. The Zn(2+) site is built by Q174 and H182.

Belongs to the SIS family. GmhA subfamily. In terms of assembly, homotetramer. Requires Zn(2+) as cofactor.

It localises to the cytoplasm. The enzyme catalyses 2 D-sedoheptulose 7-phosphate = D-glycero-alpha-D-manno-heptose 7-phosphate + D-glycero-beta-D-manno-heptose 7-phosphate. Its pathway is carbohydrate biosynthesis; D-glycero-D-manno-heptose 7-phosphate biosynthesis; D-glycero-alpha-D-manno-heptose 7-phosphate and D-glycero-beta-D-manno-heptose 7-phosphate from sedoheptulose 7-phosphate: step 1/1. Functionally, catalyzes the isomerization of sedoheptulose 7-phosphate in D-glycero-D-manno-heptose 7-phosphate. The polypeptide is Phosphoheptose isomerase (Halorhodospira halophila (strain DSM 244 / SL1) (Ectothiorhodospira halophila (strain DSM 244 / SL1))).